Consider the following 324-residue polypeptide: MHPGLLLVNLGSPASPRTKDVKAYLQEFLSDPSVIEMPAALWQPLLRGIILPTRSWRSATFYQDSWLPQGSPLIVYSQAICQQVQAALPDWNVRLAMTYGQPDIGATLKAMVADGCEKPIILPLFPQYTQSTHGGIHRQVEATGLPHTFIDSFYDQPTYIHLLATKVWQSYQAHHYDAVIFSYHSIPTAMVRHGDPYQRECEATTKAVLAERPELPADKVITAYQSKFGPMPWLKPYLKNELMQLVELGKRNVLVVTPSFVVDCLETLEEDYVQNYQTFRASGGDRFDLVPPMNKDTGFSQFLADLAIQKQEASNHAITSSSKS.

Positions 184 and 266 each coordinate Fe(2+).

Belongs to the ferrochelatase family.

The protein resides in the cytoplasm. It catalyses the reaction Fe-coproporphyrin III + 2 H(+) = coproporphyrin III + Fe(2+). Its pathway is porphyrin-containing compound metabolism; protoheme biosynthesis. Its function is as follows. Involved in coproporphyrin-dependent heme b biosynthesis. Catalyzes the insertion of ferrous iron into coproporphyrin III to form Fe-coproporphyrin III. In Lactiplantibacillus plantarum (strain ATCC BAA-793 / NCIMB 8826 / WCFS1) (Lactobacillus plantarum), this protein is Coproporphyrin III ferrochelatase.